Consider the following 231-residue polypeptide: MEDQRRGQGEEEDDSGSLPSPPLLPAHRNTDFFIDNILRPDFGCKRERERVTRDSGVRPTALPDSRSDGVSSSASSTVSSPVSSRQSNKVEQGSSKSSSPSKDSQKQILWPAWVYCTRYSDRPSSGPRTRKLKKKNNNTESDDKRPRTAFTAEQLQRLKAEFQTSRYITEQRRQALARELGLNESQIKIWFQNKRAKIKKSSGFKNALAMQLMAQGLYNHSTTTIQEEEDN.

3 disordered regions span residues 1 to 29 (MEDQ…AHRN), 43 to 105 (GCKR…KDSQ), and 121 to 148 (DRPS…RPRT). A compositionally biased stretch (basic and acidic residues) spans 43-56 (GCKRERERVTRDSG). Over residues 68-102 (DGVSSSASSTVSSPVSSRQSNKVEQGSSKSSSPSK) the composition is skewed to low complexity. The homeobox DNA-binding region spans 143–202 (DKRPRTAFTAEQLQRLKAEFQTSRYITEQRRQALARELGLNESQIKIWFQNKRAKIKKSS).

This sequence belongs to the engrailed homeobox family.

The protein resides in the nucleus. The sequence is that of Homeobox protein engrailed-1a (eng1a) from Danio rerio (Zebrafish).